Reading from the N-terminus, the 100-residue chain is Small ribosomal subunit protein uS14c (100 aa).

The protein belongs to the universal ribosomal protein uS14 family. In terms of assembly, part of the 30S ribosomal subunit.

The protein resides in the plastid. In terms of biological role, binds 16S rRNA, required for the assembly of 30S particles. The polypeptide is Small ribosomal subunit protein uS14c (Aneura mirabilis (Parasitic liverwort)).